Consider the following 221-residue polypeptide: Ras-related protein Rab-27A (221 aa).

An N-acetylserine modification is found at serine 2. The residue at position 2 (serine 2) is a Phosphoserine. GTP is bound at residue 16–24; the sequence is GDSGVGKTS. Positions 38–46 match the Effector region motif; it reads FITTVGIDF. GTP contacts are provided by residues 74–78, 133–136, and 163–165; these read DTAGQ, NKSD, and SAA. A disulfide bond links cysteine 123 and cysteine 188. S-geranylgeranyl cysteine attachment occurs at residues cysteine 219 and cysteine 221. Cysteine 221 carries the cysteine methyl ester modification.

It belongs to the small GTPase superfamily. Rab family. Binds SYTL1, SLAC2B, MYRIP, SYTL3, SYTL4 and SYTL5. Interacts with RPH3A and RPH3A. Binds MLPH and SYTL2. Interacts with UNC13D. Does not interact with the BLOC-3 complex (heterodimer of HPS1 and HPS4). Interacts (GDP-bound form preferentially) with DENND10. High levels in eye, intestine, lung, pancreas and spleen, and low or absent in brain, liver, heart, kidney, and skeletal muscle.

The protein localises to the membrane. It is found in the melanosome. The protein resides in the late endosome. Its subcellular location is the lysosome. It carries out the reaction GTP + H2O = GDP + phosphate + H(+). Regulated by guanine nucleotide exchange factors (GEFs) which promote the exchange of bound GDP for free GTP, GTPase activating proteins (GAPs) which increase the GTP hydrolysis activity, and GDP dissociation inhibitors which inhibit the dissociation of the nucleotide from the GTPase. Activated by GEFs such as DENND10. Functionally, small GTPase which cycles between active GTP-bound and inactive GDP-bound states. In its active state, binds to a variety of effector proteins to regulate homeostasis of late endocytic pathway, including endosomal positioning, maturation and secretion. Plays a role in cytotoxic granule exocytosis in lymphocytes. Required for both granule maturation and granule docking and priming at the immunologic synapse. In Rattus norvegicus (Rat), this protein is Ras-related protein Rab-27A (Rab27a).